The primary structure comprises 501 residues: Type II methyltransferase M.BsuBI (501 aa).

It belongs to the N(4)/N(6)-methyltransferase family.

It catalyses the reaction a 2'-deoxyadenosine in DNA + S-adenosyl-L-methionine = an N(6)-methyl-2'-deoxyadenosine in DNA + S-adenosyl-L-homocysteine + H(+). A beta subtype methylase that recognizes the double-stranded sequence 5'-CTGCAG-3', methylates A-5 on both strands, and protects the DNA from cleavage by the BsuBI endonuclease. This chain is Type II methyltransferase M.BsuBI (hsdBM), found in Bacillus subtilis.